The sequence spans 59 residues: Large ribosomal subunit protein bL32 (59 aa).

Positions 1–40 are disordered; the sequence is MAVQQNKKSPSKRGMHRSHDFLRTTPLSVDPGTGEVHLRH.

Belongs to the bacterial ribosomal protein bL32 family.

The protein is Large ribosomal subunit protein bL32 of Nitrosospira multiformis (strain ATCC 25196 / NCIMB 11849 / C 71).